Reading from the N-terminus, the 196-residue chain is Rac-like GTP-binding protein RAC9 (196 aa).

13–20 (GDGAVGKT) is a binding site for GTP. The short motif at 35–43 (YVPTVFDNF) is the Effector region element. Residues 60-64 (DTAGQ) and 118-121 (TKLD) each bind GTP. At cysteine 193 the chain carries Cysteine methyl ester. Cysteine 193 carries S-geranylgeranyl cysteine lipidation. The propeptide at 194 to 196 (AFL) is removed in mature form.

The protein belongs to the small GTPase superfamily. Rho family.

The protein resides in the cytoplasm. It localises to the membrane. Inactive GDP-bound Rho GTPases reside in the cytosol, are found in a complex with Rho GDP-dissociation inhibitors (Rho GDIs), and are released from the GDI protein in order to translocate to membranes upon activation. This is Rac-like GTP-binding protein RAC9 (RAC9) from Gossypium hirsutum (Upland cotton).